Here is a 316-residue protein sequence, read N- to C-terminus: MAKSQALGNAPLTSTVAENATTRSTSKPNIWRDYLTMTKPKVVAMLLLTALVGMCLAVPGIPPAKAVILGLIGIGFQSAAAAAFNHVLDRRLDTQMARTYNRPLAKGRIETWKAVVFASTLMVMGFVILLELNALTAWLTMASLVGYAVVYTVWLKHATPQNIVIGGIAGAAPPLLGWTAVTGQLDPHALLLVMLVFTWTPPHFWALAIHRRDDYAKAGIPMLPVTHGIEFTKTMVLLYTVMLFIVGLLPWLTGMSGGVYLVGSSLLNLGFIGYALKLKFADSKGHAWATFKYSIWHLLALFVVLLGDHWITSLMF.

Positions 1–21 are disordered; that stretch reads MAKSQALGNAPLTSTVAENAT. Residues 11–21 show a composition bias toward polar residues; sequence PLTSTVAENAT. The next 9 helical transmembrane spans lie at 42 to 62, 67 to 87, 115 to 135, 136 to 156, 163 to 183, 189 to 209, 235 to 255, 256 to 276, and 295 to 315; these read VVAM…PGIP, VILG…FNHV, VVFA…LNAL, TAWL…VWLK, IVIG…AVTG, ALLL…ALAI, MVLL…LTGM, SGGV…GYAL, and IWHL…TSLM.

The protein belongs to the UbiA prenyltransferase family. Protoheme IX farnesyltransferase subfamily.

It localises to the cell inner membrane. It carries out the reaction heme b + (2E,6E)-farnesyl diphosphate + H2O = Fe(II)-heme o + diphosphate. Its pathway is porphyrin-containing compound metabolism; heme O biosynthesis; heme O from protoheme: step 1/1. Functionally, converts heme B (protoheme IX) to heme O by substitution of the vinyl group on carbon 2 of heme B porphyrin ring with a hydroxyethyl farnesyl side group. The sequence is that of Protoheme IX farnesyltransferase from Photobacterium profundum (strain SS9).